We begin with the raw amino-acid sequence, 665 residues long: Methionine--tRNA ligase (665 aa).

Positions 16–26 match the 'HIGH' region motif; it reads YYPSGKAHIGH. A 'KMSKS' region motif is present at residues 311–315; that stretch reads KMSKS. Lysine 314 contributes to the ATP binding site. Positions 564–665 constitute a tRNA-binding domain; it reads DFDKIDLRVA…SALPNGAKVK (102 aa).

Belongs to the class-I aminoacyl-tRNA synthetase family. MetG type 2B subfamily. In terms of assembly, homodimer.

It localises to the cytoplasm. The catalysed reaction is tRNA(Met) + L-methionine + ATP = L-methionyl-tRNA(Met) + AMP + diphosphate. Functionally, is required not only for elongation of protein synthesis but also for the initiation of all mRNA translation through initiator tRNA(fMet) aminoacylation. In Listeria monocytogenes serotype 4b (strain F2365), this protein is Methionine--tRNA ligase.